A 231-amino-acid polypeptide reads, in one-letter code: PIAGSMVLAAILLKLGGYGIIRMMQIFPTTKTDLFLPFIVLALWGAILANLTCLQQTDLKSLIAYSSISHMGLVVAAIIIQTPWGLSGAMALMIAHGFTSSALFCLANTTYERTHTRILILTRGFHNILPMTTTWWLMTNLMNIAIPPSMNFTGELLIMSALFNWCPATIIMLGLSMLITASYSLHMFLSTQMGPTLLNSQTEPMHSREHLLITLHLAPLLMISLKPELVI.

6 helical membrane passes run 1-21 (PIAG…YGII), 34-54 (LFLP…LTCL), 63-85 (IAYS…TPWG), 89-111 (AMAL…NTTY), 128-148 (ILPM…AIPP), and 156-176 (LLIM…LGLS).

Belongs to the complex I subunit 4 family.

It localises to the mitochondrion membrane. The catalysed reaction is a ubiquinone + NADH + 5 H(+)(in) = a ubiquinol + NAD(+) + 4 H(+)(out). Its function is as follows. Core subunit of the mitochondrial membrane respiratory chain NADH dehydrogenase (Complex I) that is believed to belong to the minimal assembly required for catalysis. Complex I functions in the transfer of electrons from NADH to the respiratory chain. The immediate electron acceptor for the enzyme is believed to be ubiquinone. This chain is NADH-ubiquinone oxidoreductase chain 4 (MT-ND4), found in Crotalus concolor (Midget faded rattlesnake).